Here is a 262-residue protein sequence, read N- to C-terminus: MVLIRVLANLLILQLSYAQKSSELVIGGDECNINEHNFLVALYEYWSQSFLCGGTLINGEWVLTAAHCDRTHFLIYVGVHDRSVQFDKEQRRFPKEKYFFNCGNNFTKWDKDIMLIRLNKPVRNNEHIAPLSLPSSPPSVGSVCRVMGWGQTTSPQNTLPDVPHCANINLLDYEVCRTALPQLRLPATSRILCAGVLEGGIDTCNRDSGGPLICNGEFQGIVFWGPDPCAQPDKPALYSKVFDHLDWIQSIIAGNTIVNCPP.

The N-terminal stretch at 1–18 (MVLIRVLANLLILQLSYA) is a signal peptide. The propeptide occupies 19-262 (QKSSELVIGG…AGNTIVNCPP (244 aa)). The 229-residue stretch at 25-253 (VIGGDECNIN…HLDWIQSIIA (229 aa)) folds into the Peptidase S1 domain. Disulfide bonds link Cys-31/Cys-165, Cys-52/Cys-68, Cys-102/Cys-260, Cys-144/Cys-214, Cys-176/Cys-193, and Cys-204/Cys-229. The active-site Charge relay system is the His-67. Residue Asn-105 is glycosylated (N-linked (GlcNAc...) asparagine). Catalysis depends on Asp-112, which acts as the Charge relay system. The Charge relay system role is filled by Ser-208.

It belongs to the peptidase S1 family. Snake venom subfamily. As to quaternary structure, monomer. In terms of tissue distribution, expressed by the venom gland.

It is found in the secreted. In terms of biological role, thrombin-like snake venom serine protease. Displays a specificity similar to trypsin. Releases only fibrinopeptide A in the conversion of fibrinogen to fibrin. Shows coagulant, esterase and amidase activities. Reversibly increases the permeability of the blood brain barrier (BBB) in mice. Induces the barrel rotation syndrome in mice, which is manifested by gyroxin-like, rapid rolling motions. This syndrome may be due to its effect on BBB permeability, and certainly also to other actions affecting endogenous substrates present in the endothelium, nervous tissues or blood. The polypeptide is Thrombin-like enzyme gyroxin B1.4 (Crotalus durissus terrificus (South American rattlesnake)).